The primary structure comprises 752 residues: Glutamate carboxypeptidase 2 (752 aa).

Residues Met1–Arg19 lie on the Cytoplasmic side of the membrane. Ser10 carries the post-translational modification Phosphoserine. A helical; Signal-anchor for type II membrane protein membrane pass occupies residues Trp20–Ile44. Over Lys45–Asp752 the chain is Extracellular. Asn48, Asn78, Asn123, Asn155, and Asn197 each carry an N-linked (GlcNAc...) asparagine glycan. Residues Arg212 and Asn259 each contribute to the substrate site. Ca(2+) is bound by residues Thr271 and Tyr274. The tract at residues Ala276 to Leu589 is NAALADase. Asn338 is a glycosylation site (N-linked (GlcNAc...) asparagine). Zn(2+)-binding residues include His379 and Asp389. A substrate-binding site is contributed by Glu426. Glu426 (nucleophile; for NAALADase activity) is an active-site residue. Position 427 (Glu427) interacts with Zn(2+). Ca(2+)-binding residues include Glu435 and Glu438. Asp455 is a binding site for Zn(2+). 2 N-linked (GlcNAc...) asparagine glycosylation sites follow: Asn461 and Asn478. Substrate-binding positions include Ser519–Gly520, Asn521, Arg536–Arg538, Tyr554, and Tyr554–His555. Residue His555 coordinates Zn(2+). The N-linked (GlcNAc...) asparagine glycan is linked to Asn615. The active-site Charge relay system is the Ser630. The N-linked (GlcNAc...) asparagine glycan is linked to Asn640. Active-site charge relay system residues include Asp668 and His691. Lys701–Tyr702 is a substrate binding site.

Belongs to the peptidase M28 family. M28B subfamily. Homodimer. Zn(2+) serves as cofactor. In terms of tissue distribution, widely expressed throughout brain regions with highest levels in the hippocampus, dentate gyrus, priform cortex, choroid plexus of ventricles, pineal gland, anterior lobe of the pituitary gland and supraoptic nucleus. High levels also found in the cerebral cortex, substantia nigra, pontine nucleus and the granule cell layer of cerebellum. Highly expressed in astrocytes and non-myelinating Schwann cells. Also expressed in kidney, localizing to the proximal brush border of the renal tube.

It is found in the cell membrane. The enzyme catalyses Release of an unsubstituted, C-terminal glutamyl residue, typically from Ac-Asp-Glu or folylpoly-gamma-glutamates.. Its activity is regulated as follows. The NAALADase activity is inhibited by beta-NAAG, quisqualic acid and 2-(phosphonomethyl)glutaric acid (PMG). Functionally, has both folate hydrolase and N-acetylated-alpha-linked-acidic dipeptidase (NAALADase) activity. Has a preference for tri-alpha-glutamate peptides. In the intestine, required for the uptake of folate. In the brain, modulates excitatory neurotransmission through the hydrolysis of the neuropeptide, N-aceylaspartylglutamate (NAAG), thereby releasing glutamate. Also exhibits a dipeptidyl-peptidase IV type activity. In vitro, cleaves Gly-Pro-AMC. The polypeptide is Glutamate carboxypeptidase 2 (Folh1) (Rattus norvegicus (Rat)).